The chain runs to 576 residues: Catalase-peroxidase (576 aa).

The tryptophyl-tyrosyl-methioninium (Trp-Tyr) (with M-250) cross-link spans 95–224 (WHAAGSYRAA…LAAVQMGLIY (130 aa)). Histidine 96 (proton acceptor) is an active-site residue. Positions 224 to 250 (YVNPEGVNGQPDPARTALHIRETFARM) form a cross-link, tryptophyl-tyrosyl-methioninium (Tyr-Met) (with W-95). A heme b-binding site is contributed by histidine 265.

Belongs to the peroxidase family. Peroxidase/catalase subfamily. Homotetramer. Requires heme b as cofactor. Post-translationally, formation of the three residue Trp-Tyr-Met cross-link is important for the catalase, but not the peroxidase activity of the enzyme.

The enzyme catalyses H2O2 + AH2 = A + 2 H2O. The catalysed reaction is 2 H2O2 = O2 + 2 H2O. Bifunctional enzyme with both catalase and broad-spectrum peroxidase activity. Also displays NADH oxidase, INH lyase and isonicotinoyl-NAD synthase activities. Important for stationary phase survival. In Rhodobacter capsulatus (Rhodopseudomonas capsulata), this protein is Catalase-peroxidase (katG).